Reading from the N-terminus, the 286-residue chain is Ribosomal RNA small subunit methyltransferase A (286 aa).

The S-adenosyl-L-methionine site is built by Asn28, Leu30, Gly55, Glu77, Asp103, and Asn123.

This sequence belongs to the class I-like SAM-binding methyltransferase superfamily. rRNA adenine N(6)-methyltransferase family. RsmA subfamily.

The protein localises to the cytoplasm. It catalyses the reaction adenosine(1518)/adenosine(1519) in 16S rRNA + 4 S-adenosyl-L-methionine = N(6)-dimethyladenosine(1518)/N(6)-dimethyladenosine(1519) in 16S rRNA + 4 S-adenosyl-L-homocysteine + 4 H(+). Specifically dimethylates two adjacent adenosines (A1518 and A1519) in the loop of a conserved hairpin near the 3'-end of 16S rRNA in the 30S particle. May play a critical role in biogenesis of 30S subunits. The protein is Ribosomal RNA small subunit methyltransferase A of Rhodopseudomonas palustris (strain BisB18).